The following is a 783-amino-acid chain: MAAPVAPGAVDQLAADLGNTSLGGGDNRAAPAINTNVAPGEYQTADPDTAGPTPSSAAPHPQSSASLYVGELDPSVTEAMLFELFSQIGSVASIRVCRDTITRRSLGYAYVNYNSTSDGEKALEELNYTLIKGRPCRIMWSQRDPALRKTGQGNVFIKNLDVAIDNKALHDTFAAFGNILSCKVAQDENGNSKGYGFVHYETDEAAAQAIKHVNNMLLNEKKVYVGYHIPKKDRQSKFEEMKANFTNIYVKNISLEATDEEFRDLFAKYGDVTSSSLARDSEGKSRGFGFVNFTTHECAAKAVEELNGKEFRGQDLYVGRAQKKHEREEELRKSYEAARLEKANKYQGVNLYIKNLADDIDDDKLRQMFSEYGPITSAKVMRDAVTEGSAEEETEGKDKENKKEGEQAAEAEGEAEGAEKKTEKKGDRRLGKSKGFGFVCFSNPDDATKAVAEMNQRMIEGKPLYVALAQRKDVRKNQLEASIQARNQLRMQQAAAQAGLPQQYMQTPVYYAPGQQPNFMPPGGRGMPFPQGGLGMPAVQGGRPGQFPPYAQQGGRGGMPPQQLPIYPLGQFPPGAYPQPNNPQFLAAIQQVQQQAAALGNGRGGPGGPGGRGMQGMPVPQGMPGGPGMAGFPPNGRPQNGNMGGRGGPGRGGNFAAGRGAPPAGPLAAGGELNASSLLQSQLTATNNPQQQKQILGENLFPKIQALQPDLAGKITGMLLEMDNAELVNLLEDEAALVAKVNEAMAVYDEYVKSQQGPGQGPAPTQGEAEAEKPKEEKAEEKA.

The disordered stretch occupies residues 16–65 (DLGNTSLGGGDNRAAPAINTNVAPGEYQTADPDTAGPTPSSAAPHPQSSA). The segment covering 54–65 (PSSAAPHPQSSA) has biased composition (low complexity). RRM domains lie at 65–143 (ASLY…WSQR), 153–230 (GNVF…YHIP), 246–323 (TNIY…RAQK), and 349–471 (VNLY…LAQR). Disordered stretches follow at residues 381-428 (MRDA…KGDR), 596-671 (AAAL…AAGG), and 752-783 (VKSQ…EEKA). A compositionally biased stretch (basic and acidic residues) spans 396 to 406 (GKDKENKKEGE). Over residues 407 to 416 (QAAEAEGEAE) the composition is skewed to acidic residues. Residues 417 to 428 (GAEKKTEKKGDR) are compositionally biased toward basic and acidic residues. Positions 601-614 (NGRGGPGGPGGRGM) are enriched in gly residues. The span at 630–641 (AGFPPNGRPQNG) shows a compositional bias: low complexity. The segment covering 642-655 (NMGGRGGPGRGGNF) has biased composition (gly residues). A compositionally biased stretch (low complexity) spans 656-671 (AAGRGAPPAGPLAAGG). A PABC domain is found at 676–753 (SSLLQSQLTA…AMAVYDEYVK (78 aa)). Residues 770–783 (EAEKPKEEKAEEKA) show a composition bias toward basic and acidic residues.

It belongs to the polyadenylate-binding protein type-1 family.

Its subcellular location is the cytoplasm. It is found in the nucleus. Its function is as follows. Binds the poly(A) tail of mRNA. Appears to be an important mediator of the multiple roles of the poly(A) tail in mRNA biogenesis, stability and translation. In the nucleus, involved in both mRNA cleavage and polyadenylation. Is also required for efficient mRNA export to the cytoplasm. Acts in concert with a poly(A)-specific nuclease (PAN) to affect poly(A) tail shortening, which may occur concomitantly with either nucleocytoplasmic mRNA transport or translational initiation. In the cytoplasm, stimulates translation initiation and regulates mRNA decay through translation termination-coupled poly(A) shortening, probably mediated by PAN. This is Polyadenylate-binding protein, cytoplasmic and nuclear (PAB1) from Chaetomium globosum (strain ATCC 6205 / CBS 148.51 / DSM 1962 / NBRC 6347 / NRRL 1970) (Soil fungus).